The following is a 282-amino-acid chain: 3-methyl-2-oxobutanoate hydroxymethyltransferase (282 aa).

Residues Asp44 and Asp83 each contribute to the Mg(2+) site. 3-methyl-2-oxobutanoate is bound by residues 44 to 45 (DS), Asp83, and Lys112. A Mg(2+)-binding site is contributed by Glu114. Glu181 acts as the Proton acceptor in catalysis.

Belongs to the PanB family. Homodecamer; pentamer of dimers. Requires Mg(2+) as cofactor.

It localises to the cytoplasm. It carries out the reaction 3-methyl-2-oxobutanoate + (6R)-5,10-methylene-5,6,7,8-tetrahydrofolate + H2O = 2-dehydropantoate + (6S)-5,6,7,8-tetrahydrofolate. It participates in cofactor biosynthesis; coenzyme A biosynthesis. In terms of biological role, catalyzes the reversible reaction in which hydroxymethyl group from 5,10-methylenetetrahydrofolate is transferred onto alpha-ketoisovalerate to form ketopantoate. In Pyrococcus abyssi (strain GE5 / Orsay), this protein is 3-methyl-2-oxobutanoate hydroxymethyltransferase.